The following is a 545-amino-acid chain: uncharacterized protein (545 aa).

Composition is skewed to basic and acidic residues over residues 34–44 and 53–63; these read PMNKQNEKLKT and PRNDYSRRVSR. Disordered regions lie at residues 34–98, 269–296, and 415–444; these read PMNK…PESN, QNGT…PQDS, and ERPQ…SAPE. A compositionally biased stretch (polar residues) spans 69–78; the sequence is TDSSEQQITA. Residues 415–428 are compositionally biased toward basic and acidic residues; the sequence is ERPQRKTEHVKTPE. The segment covering 429–441 has biased composition (polar residues); it reads ENLQTKNPTTMTS.

This is an uncharacterized protein from Mus musculus (Mouse).